A 666-amino-acid polypeptide reads, in one-letter code: Putative cysteine-rich receptor-like protein kinase 20 (666 aa).

An N-terminal signal peptide occupies residues methionine 1–alanine 23. Topologically, residues glutamine 24–serine 264 are extracellular. 2 consecutive Gnk2-homologous domains span residues phenylalanine 27–isoleucine 131 and threonine 137–phenylalanine 241. N-linked (GlcNAc...) asparagine glycans are attached at residues asparagine 32, asparagine 42, asparagine 60, asparagine 69, and asparagine 103. An N-linked (GlcNAc...) asparagine glycan is attached at asparagine 262. The chain crosses the membrane as a helical span at residues valine 265–phenylalanine 285. Topologically, residues serine 286–arginine 666 are cytoplasmic. The 280-residue stretch at phenylalanine 344–leucine 623 folds into the Protein kinase domain. ATP is bound by residues leucine 350–valine 358 and lysine 372. Position 417 is a phosphotyrosine (tyrosine 417). Residue aspartate 469 is the Proton acceptor of the active site. Position 509 is a phosphothreonine (threonine 509). The residue at position 517 (tyrosine 517) is a Phosphotyrosine.

The protein belongs to the protein kinase superfamily. Ser/Thr protein kinase family. CRK subfamily.

It is found in the membrane. The catalysed reaction is L-seryl-[protein] + ATP = O-phospho-L-seryl-[protein] + ADP + H(+). It carries out the reaction L-threonyl-[protein] + ATP = O-phospho-L-threonyl-[protein] + ADP + H(+). This is Putative cysteine-rich receptor-like protein kinase 20 (CRK20) from Arabidopsis thaliana (Mouse-ear cress).